A 257-amino-acid chain; its full sequence is Caspase-14 (257 aa).

Catalysis depends on residues H93 and C136. Positions D156–L167 are excised as a propeptide.

The protein belongs to the peptidase C14A family. Heterodimer of a large and a small subunit, both processed from the precursor; the mature active form is a p17/p10 dimer and the intermediate form a p20/p8 dimer. Maturation by proteolytic processing appears to be a two-step process. The precursor is processed by KLK7 to yield the p20/p8 intermediate form which acts the precursor to yield the p17/p10 mature form. Initially it was reported that cleavage by granzyme B, caspase-8 and -10 generates the two active subunits, however the physiological relevance has not been established. In terms of tissue distribution, embryo, adult liver and less in adult brain and kidney. Expressed in differentiating keratinocytes of embryonic skin (at protein level). Expressed in keratinocytes of adult skin suprabasal layers (at protein level).

The protein localises to the cytoplasm. The protein resides in the nucleus. Functionally, non-apoptotic caspase which is involved in epidermal differentiation. Seems to play a role in keratinocyte differentiation and is required for cornification. Regulates maturation of the epidermis by proteolytically processing filaggrin. In vitro is equally active on the synthetic caspase substrates WEHD-ACF and IETD-AFC. Involved in processing of prosaposin in the epidermis. May be involved in retinal pigment epithelium cell barrier function. In Mus musculus (Mouse), this protein is Caspase-14 (Casp14).